The chain runs to 242 residues: DNA repair protein RecO (242 aa).

The protein belongs to the RecO family.

Its function is as follows. Involved in DNA repair and RecF pathway recombination. The protein is DNA repair protein RecO of Xanthobacter autotrophicus (strain ATCC BAA-1158 / Py2).